We begin with the raw amino-acid sequence, 265 residues long: Expansin-like A2 (265 aa).

The signal sequence occupies residues 1-21 (MLQGFLFLLSVVLLFSSSAAA). The Expansin-like EG45 domain occupies 42 to 148 (SGACAYGSMA…RRVPCDYGNK (107 aa)). 2 N-linked (GlcNAc...) asparagine glycosylation sites follow: Asn100 and Asn103. Positions 162–244 (NYLAIKLLYQ…NWEAGKSYDA (83 aa)) constitute an Expansin-like CBD domain.

This sequence belongs to the expansin family. Expansin-like A subfamily.

The protein resides in the secreted. This Arabidopsis thaliana (Mouse-ear cress) protein is Expansin-like A2 (EXLA2).